Here is a 242-residue protein sequence, read N- to C-terminus: Cysteine-rich venom protein VAR11 (242 aa).

The signal sequence occupies residues 1–19 (MILLKLYLTLAAILCQSRG). The region spanning 41 to 169 (NKHNDLRRTV…SLKYFQVCQY (129 aa)) is the SCP domain. 8 cysteine pairs are disulfide-bonded: C77/C156, C95/C170, C151/C167, C189/C196, C192/C201, C205/C237, C214/C231, and C223/C235. One can recognise a ShKT domain in the interval 205–237 (CAYNDDYTSCPDLTKQVGCNHPVTANCKASCQC).

It belongs to the CRISP family. Expressed by the venom gland.

The protein resides in the secreted. Blocks ryanodine receptors, and potassium channels. The sequence is that of Cysteine-rich venom protein VAR11 from Varanus varius (Lace monitor lizard).